Consider the following 195-residue polypeptide: Probable molybdenum cofactor guanylyltransferase (195 aa).

Residues 6–8 (LAG), Lys-18, Asp-67, and Asp-93 contribute to the GTP site. Asp-93 lines the Mg(2+) pocket.

It belongs to the MobA family. Mg(2+) serves as cofactor.

It localises to the cytoplasm. It carries out the reaction Mo-molybdopterin + GTP + H(+) = Mo-molybdopterin guanine dinucleotide + diphosphate. Functionally, transfers a GMP moiety from GTP to Mo-molybdopterin (Mo-MPT) cofactor (Moco or molybdenum cofactor) to form Mo-molybdopterin guanine dinucleotide (Mo-MGD) cofactor. In Thermococcus sibiricus (strain DSM 12597 / MM 739), this protein is Probable molybdenum cofactor guanylyltransferase.